The following is a 75-amino-acid chain: Small ribosomal subunit protein bS18 (75 aa).

This sequence belongs to the bacterial ribosomal protein bS18 family. Part of the 30S ribosomal subunit. Forms a tight heterodimer with protein bS6.

Functionally, binds as a heterodimer with protein bS6 to the central domain of the 16S rRNA, where it helps stabilize the platform of the 30S subunit. This is Small ribosomal subunit protein bS18 from Acinetobacter baylyi (strain ATCC 33305 / BD413 / ADP1).